Reading from the N-terminus, the 1135-residue chain is DNA-directed RNA polymerase I subunit RPA2 (1135 aa).

The segment at 1–24 (MDPGSRWRNLPSGPSLKHLTDPSY) is disordered. RNA is bound at residue Arg180. The loop B stretch occupies residues 194-208 (IRPKWKTRGPGYTQY). A loop A region spans residues 236–247 (LNFIYRKELFFL). Residue Asp367 coordinates RNA. Fork loop stretches follow at residues 439–453 (LRSK…DSGL) and 474–489 (RGAD…VRRL). A Mg(2+)-binding site is contributed by Asp755. Residue Lys890 participates in RNA binding. Arg1020 and Arg1036 together coordinate DNA. Residue Ser1051 is modified to Phosphoserine. Zn(2+) is bound by residues Cys1070, Cys1073, Cys1098, and Cys1101. A C4-type zinc finger spans residues 1070–1101 (CVKCGSLLSPLLEKPPPSWSAMRNRKYNCTLC).

The protein belongs to the RNA polymerase beta chain family. As to quaternary structure, component of the RNA polymerase I (Pol I) complex consisting of 13 subunits: a ten-subunit catalytic core composed of POLR1A/RPA1, POLR1B/RPA2, POLR1C/RPAC1, POLR1D/RPAC2, POLR1H/RPA12, POLR2E/RPABC1, POLR2F/RPABC2, POLR2H/RPABC3, POLR2K/RPABC4 and POLR2L/RPABC5; a mobile stalk subunit POLR1F/RPA43 protruding from the core and additional subunits homologous to general transcription factors POLR1E/RPA49 and POLR1G/RPA34. Part of Pol I pre-initiation complex (PIC), in which Pol I core assembles with RRN3 and promoter-bound UTBF and SL1/TIF-IB complex. Requires Mg(2+) as cofactor.

It localises to the nucleus. The protein localises to the nucleolus. Its subcellular location is the chromosome. The enzyme catalyses RNA(n) + a ribonucleoside 5'-triphosphate = RNA(n+1) + diphosphate. Catalytic core component of RNA polymerase I (Pol I), a DNA-dependent RNA polymerase which synthesizes ribosomal RNA precursors using the four ribonucleoside triphosphates as substrates. Transcribes 47S pre-rRNAs from multicopy rRNA gene clusters, giving rise to 5.8S, 18S and 28S ribosomal RNAs. Pol I-mediated transcription cycle proceeds through transcription initiation, transcription elongation and transcription termination stages. During transcription initiation, Pol I pre-initiation complex (PIC) is recruited by the selectivity factor 1 (SL1/TIF-IB) complex bound to the core promoter that precedes an rDNA repeat unit. The PIC assembly bends the promoter favoring the formation of the transcription bubble and promoter escape. Once the polymerase has escaped from the promoter it enters the elongation phase during which RNA is actively polymerized, based on complementarity with the template DNA strand. Highly processive, assembles in structures referred to as 'Miller trees' where many elongating Pol I complexes queue and transcribe the same rDNA coding regions. At terminator sequences downstream of the rDNA gene, PTRF interacts with Pol I and halts Pol I transcription leading to the release of the RNA transcript and polymerase from the DNA. Forms Pol I active center together with the largest subunit POLR1A/RPA1. Appends one nucleotide at a time to the 3' end of the nascent RNA, with POLR1A/RPA1 contributing a Mg(2+)-coordinating DxDGD motif, and POLR1B/RPA2 participating in the coordination of a second Mg(2+) ion and providing lysine residues believed to facilitate Watson-Crick base pairing between the incoming nucleotide and the template base. Typically, Mg(2+) ions direct a 5' nucleoside triphosphate to form a phosphodiester bond with the 3' hydroxyl of the preceding nucleotide of the nascent RNA, with the elimination of pyrophosphate. Has proofreading activity: Pauses and backtracks to allow the cleavage of a missincorporated nucleotide via POLR1H/RPA12. High Pol I processivity is associated with decreased transcription fidelity. The sequence is that of DNA-directed RNA polymerase I subunit RPA2 from Homo sapiens (Human).